We begin with the raw amino-acid sequence, 367 residues long: MLAVGAMEGTRQSAFLLSSPPLAALHSMAEMKTPLYPAAYPPLPAGPPSSSSSSSSSSSPSPPLGTHNPGGLKPPATGGLSSLGSPPQQLSAATPHGINDILSRPSMPVASGAALPSASPSGSSSSSSSSASASSASAAAAAAAAAAAAASSPAGLLAGLPRFSSLSPPPPPPGLYFSPSAAAVAAVGRYPKPLAELPGRTPIFWPGVMQSPPWRDARLACTPHQGSILLDKDGKRKHTRPTFSGQQIFALEKTFEQTKYLAGPERARLAYSLGMTESQVKVWFQNRRTKWRKKHAAEMATAKKKQDSETERLKGASENEEEDDDYNKPLDPNSDDEKITQLLKKHKSSSGGGGGLLLHASEPESSS.

A disordered region spans residues 36 to 133 (YPAAYPPLPA…SSSSSSSASA (98 aa)). Low complexity-rich tracts occupy residues 48–59 (PSSSSSSSSSSS), 78–91 (GGLS…QQLS), and 110–133 (ASGA…SASA). The segment at 102–268 (LSRPSMPVAS…KYLAGPERAR (167 aa)) is repressor domain. The residue at position 189 (arginine 189) is an Asymmetric dimethylarginine. The segment at residues 236–295 (RKHTRPTFSGQQIFALEKTFEQTKYLAGPERARLAYSLGMTESQVKVWFQNRRTKWRKKH) is a DNA-binding region (homeobox). Positions 294–367 (KHAAEMATAK…LHASEPESSS (74 aa)) are disordered. The segment covering 304–317 (KKQDSETERLKGAS) has biased composition (basic and acidic residues). Residues 306–367 (QDSETERLKG…LHASEPESSS (62 aa)) are involved in DNA-binding.

As to expression, pancreatic beta cells.

The protein resides in the nucleus. Transcription factor which binds to specific A/T-rich DNA sequences in the promoter regions of a number of genes. Involved in the development of insulin-producing beta cells in the islets of Langerhans at the secondary transition. Together with NKX2-2 and IRX3 acts to restrict the generation of motor neurons to the appropriate region of the neural tube. Belongs to the class II proteins of neuronal progenitor factors, which are induced by SHH signals. This is Homeobox protein Nkx-6.1 (NKX6-1) from Homo sapiens (Human).